Here is a 479-residue protein sequence, read N- to C-terminus: MAGSLKKLAKAESCRLMQEKLESWSKDYEINSCDQNLNQCCELIEMTSVIQGQLFTILNETSRESGHYAGVDTIKTRLLPWLGTWFSHATSGRLFETGLFLNQDSTETERKLRQLATSQTLQLQDLQEELTSTRLELNHVQQDLAQTQLALEDTKTQLATTLLTAADEIIQLRAVLKASRAQEEDSLRRLDHLNDCEQQIERLRDELSILDAQKSVLQSRIARSRSPSPRRIRSRSPSPLPLRSCSPGRARSTNASRHAFLVARFGDIYSKDRFDAERILRTYISDMEMVQRIIYTAAVESFHAAKMAYRQFKMRVRKTLSIGHSGPESLEDTVMDYIVRHEDLYDVQASVNEVIRSMNINPKISSTPECDFAVISSFIRELCRVAFSMQTLTPPLDVAFGMDGEFFSETKYHRSVDSDYTAALVAYHVWPALMENDVVIVKGEAVTKRGALWSHRSRSRSQNRSRSVSPLLSHLSRSR.

Coiled-coil stretches lie at residues 109 to 161 (ERKL…LATT) and 187 to 223 (LRRLDHLNDCEQQIERLRDELSILDAQKSVLQSRIAR). Disordered stretches follow at residues 220-251 (RIARSRSPSPRRIRSRSPSPLPLRSCSPGRAR) and 456-479 (RSRSRSQNRSRSVSPLLSHLSRSR). Over residues 235–249 (RSPSPLPLRSCSPGR) the composition is skewed to low complexity.

It belongs to the MIEAP family.

Its subcellular location is the cytoplasm. The protein resides in the cytosol. The protein localises to the mitochondrion outer membrane. It localises to the mitochondrion matrix. In terms of biological role, key regulator of mitochondrial quality that mediates the repairing or degradation of unhealthy mitochondria in response to mitochondrial damage. Mediator of mitochondrial protein catabolic process (also named MALM) by mediating the degradation of damaged proteins inside mitochondria by promoting the accumulation in the mitochondrial matrix of hydrolases that are characteristic of the lysosomal lumen. Also involved in mitochondrion degradation of damaged mitochondria by promoting the formation of vacuole-like structures (named MIV), which engulf and degrade unhealthy mitochondria by accumulating lysosomes. Binds cardiolipin. May form molecular condensates (non-membrane-bounded organelles) within mitochondria that compartmentalize and promote cardiolipin metabolism. The chain is Mitochondria-eating protein (SPATA18) from Gallus gallus (Chicken).